The sequence spans 1066 residues: Protein sts5 (1066 aa).

Residues 18-28 show a composition bias toward low complexity; the sequence is QQDPSDAQSSP. Disordered regions lie at residues 18 to 40, 154 to 178, and 247 to 286; these read QQDP…SLTT, ATST…SPNS, and SNFR…RKNL. Positions 29-40 are enriched in polar residues; that stretch reads TFVPSANPSLTT. T157 is modified (phosphothreonine). Residues 168–178 are compositionally biased toward low complexity; that stretch reads HSVASVSSPNS. T262 is subject to Phosphothreonine. Phosphoserine is present on S264. Gly residues predominate over residues 270 to 280; it reads SGSGFSSGGSG. Phosphothreonine is present on T377. The disordered stretch occupies residues 454–480; that stretch reads SSAANKERQTSSGNQGSSNNSGNDKPK. The span at 464 to 476 shows a compositional bias: low complexity; that stretch reads SSGNQGSSNNSGN. The region spanning 482–556 is the CSD2 domain; that stretch reads VWFKPSDKRV…AQVSALLHDT (75 aa). The region spanning 618–934 is the RNB domain; the sequence is NINSSSATDF…VHYQLQLLLR (317 aa). One can recognise a DIS3L2 C-terminal domain in the interval 983 to 1033; that stretch reads QDGLVCFVAPSYFDVFFPSLGMEKRVHLDLLNLTHVRFEEDQGILSLYDES.

Belongs to the RNR ribonuclease family. As to quaternary structure, interacts with serine/threonine phosphatase ppe1, protein kinase C and an osmosensing MAP kinase.

It localises to the cytoplasm. Its function is as follows. Required for the maintenance of cell shape during interphase. Required for localization of cortical actin to the growing tips before mitosis. This is Protein sts5 (sts5) from Schizosaccharomyces pombe (strain 972 / ATCC 24843) (Fission yeast).